The primary structure comprises 107 residues: Small ribosomal subunit protein uS17 (107 aa).

The protein belongs to the universal ribosomal protein uS17 family. In terms of assembly, part of the 30S ribosomal subunit.

One of the primary rRNA binding proteins, it binds specifically to the 5'-end of 16S ribosomal RNA. The chain is Small ribosomal subunit protein uS17 from Thermotoga sp. (strain RQ2).